The following is a 278-amino-acid chain: MNTTGSAFVIGASGIGRACALAFARRGVSGLVVADVDLQAAESLAAECRAEAGSAGTADALGCAEATRVDVADERSVELAVSFARRVLGRVDYCVNSAGIGVKLANEIADASPVEFEAMFQVNVKGTFLVTRAVSALMKTQDPVPVLRDSPGRGTTRGCIVILGSAAAFAATPKMVQYTTAKHAVLGLTKSAALDNAAHGIRVNSVCPSWVDTPMVRRALQDVPELEQTIRTSVPMGRIALAEEVADAVMFLCSPGASYATGCNMILDGGTTLTTHLG.

NADP(+) contacts are provided by isoleucine 15, aspartate 70, arginine 132, tyrosine 178, lysine 182, valine 211, and threonine 213. Tyrosine 178 functions as the Proton donor in the catalytic mechanism. Lysine 182 acts as the Lowers pKa of active site Tyr in catalysis.

Belongs to the short-chain dehydrogenases/reductases (SDR) family.

It functions in the pathway polyketide biosynthesis. In terms of biological role, short-chain dehydrogenase; part of the gene cluster that mediates the biosynthesis of pyriculol and pyriculariol, two heptaketides that induce lesion formation upon application on rice leaves but are dispensable for pathogenicity. The highly reducing polyketide synthase synthesizes the heptaketide backbone of pyriculol and pyriculariol. Pyriculol and pyriculariol contain several hydroxyl moieties and double bonds, so it can be assumed that several reduction steps occur during biosynthesis. These reactions could be executed by PKS19 itself or partly by the tailoring enzymes OXR1, OXR2, RED1, RED2 or RED3, identified within the cluster. The FAD-linked oxidoreductase OXR1 is the only tailoring enzyme for which the function has been determined yet, and is involved in the oxidation of dihydropyriculol and dihydropyriculariol into pyriculol and pyriculariol, respectively. This is Short-chain dehydrogenase RED2 from Pyricularia oryzae (strain 70-15 / ATCC MYA-4617 / FGSC 8958) (Rice blast fungus).